We begin with the raw amino-acid sequence, 185 residues long: Small ribosomal subunit protein bS6 (185 aa).

Residues 115–141 (AAQKAAAEKAEAARLEAEKAAEEEAAK) are compositionally biased toward basic and acidic residues. Positions 115 to 185 (AAQKAAAEKA…EEPKSDEEDA (71 aa)) are disordered. The span at 142-169 (AAEAQAKEAPAAEAPAEEAPAAEAPAEA) shows a compositional bias: low complexity. Residues 170–185 (PAEEPAEEPKSDEEDA) show a composition bias toward acidic residues.

This sequence belongs to the bacterial ribosomal protein bS6 family.

Its function is as follows. Binds together with bS18 to 16S ribosomal RNA. This Desulfatibacillum aliphaticivorans protein is Small ribosomal subunit protein bS6.